The following is a 520-amino-acid chain: Beta-galactoside-specific lectin 4 (520 aa).

An N-linked (GlcNAc...) asparagine glycan is attached at N107. The active site involves E159. Cysteines 240 and 266 form a disulfide. Positions 241-265 are cleaved as a propeptide — connecting peptide; sequence GERPSSSDVRYWPLVIRPVIADDVT. Positions 269 to 396 constitute a Ricin B-type lectin 1 domain; the sequence is SEPTVRIVGR…YTLGQGWLAG (128 aa). D-galactose is bound at residue 284 to 286; that stretch reads DVR. The N-linked (GlcNAc...) asparagine glycan is linked to N322. A disulfide bridge connects residues C325 and C342. Residues N357 and N397 are each glycosylated (N-linked (GlcNAc...) asparagine). Residues 400–520 enclose the Ricin B-type lectin 2 domain; sequence APREVTIYGF…KPNQMWLPVP (121 aa). Intrachain disulfides connect C413-C426 and C451-C467. 494–496 contributes to the D-galactose binding site; sequence DVA.

The protein belongs to the ribosome-inactivating protein family. Type 2 RIP subfamily. Disulfide-linked dimer of A and B chains.

The enzyme catalyses Endohydrolysis of the N-glycosidic bond at one specific adenosine on the 28S rRNA.. In terms of biological role, the A chain is responsible for inhibiting protein synthesis through the catalytic inactivation of 60S ribosomal subunits by removing adenine from position 4,324 of 28S rRNA. The B chain binds to cell receptors and probably facilitates the entry into the cell of the A chain; B chains are also responsible for cell agglutination (lectin activity). Inhibits growth of the human tumor cell line Molt4. This chain is Beta-galactoside-specific lectin 4, found in Viscum album (European mistletoe).